The following is a 225-amino-acid chain: LexA repressor (225 aa).

A DNA-binding region (H-T-H motif) is located at residues 26–46; the sequence is YEEMKDSLNLKSKSGIHRLIS. Active-site for autocatalytic cleavage activity residues include Ser-146 and Lys-184.

The protein belongs to the peptidase S24 family. As to quaternary structure, homodimer.

It carries out the reaction Hydrolysis of Ala-|-Gly bond in repressor LexA.. Represses a number of genes involved in the response to DNA damage (SOS response), including recA and lexA. In the presence of single-stranded DNA, RecA interacts with LexA causing an autocatalytic cleavage which disrupts the DNA-binding part of LexA, leading to derepression of the SOS regulon and eventually DNA repair. The sequence is that of LexA repressor from Pelagibacter ubique (strain HTCC1062).